Reading from the N-terminus, the 302-residue chain is Bifunctional ligase/repressor BirA (302 aa).

The H-T-H motif DNA-binding region spans 14 to 33 (QPKVRSELEKFSKNLEEDIQ). In terms of domain architecture, BPL/LPL catalytic spans 62 to 236 (QISTALFPYS…HLYTRLNIFE (175 aa)). Biotin is bound by residues 80–82 (STN), Q103, 107–109 (RGR), and K167.

It belongs to the biotin--protein ligase family.

The enzyme catalyses biotin + L-lysyl-[protein] + ATP = N(6)-biotinyl-L-lysyl-[protein] + AMP + diphosphate + H(+). In terms of biological role, acts both as a biotin--[acetyl-CoA-carboxylase] ligase and a biotin-operon repressor. In the presence of ATP, BirA activates biotin to form the BirA-biotinyl-5'-adenylate (BirA-bio-5'-AMP or holoBirA) complex. HoloBirA can either transfer the biotinyl moiety to the biotin carboxyl carrier protein (BCCP) subunit of acetyl-CoA carboxylase, or bind to the biotin operator site and inhibit transcription of the operon. The sequence is that of Bifunctional ligase/repressor BirA from Haemophilus influenzae (strain ATCC 51907 / DSM 11121 / KW20 / Rd).